We begin with the raw amino-acid sequence, 2185 residues long: Genome polyprotein (2185 aa).

G2 carries the N-myristoyl glycine; by host lipid modification. The Cytoplasmic segment spans residues G2–Q1495. The tract at residues F568–V584 is amphipathic alpha-helix. Active-site for protease 2A activity residues include H872 and D890. Residues C907 and C909 each contribute to the Zn(2+) site. The For protease 2A activity role is filled by C961. Zn(2+) contacts are provided by C967 and H969. The tract at residues N1101–Q1173 is membrane-binding. An oligomerization region spans residues N1101–T1239. The RNA-binding stretch occupies residues A1122–Q1126. The region spanning E1205–N1361 is the SF3 helicase domain. Residues C1369, C1381, and C1386 each coordinate Zn(2+). The segment at C1369–C1386 adopts a C4-type; degenerate zinc-finger fold. An RNA-binding region spans residues E1413 to V1420. Residues L1424–Q1429 form an oligomerization region. The stretch at A1496–Y1511 is an intramembrane region. The Cytoplasmic segment spans residues K1512–F2185. Y1521 is subject to O-(5'-phospho-RNA)-tyrosine. A Peptidase C3 domain is found at G1541 to F1719. Residues H1580, E1611, and C1687 each act as for protease 3C activity in the active site. The region spanning G1950 to L2066 is the RdRp catalytic domain. D1956 and D2052 together coordinate Mg(2+).

Belongs to the picornaviruses polyprotein family. Interacts with capsid protein VP1 and capsid protein VP3 to form heterotrimeric protomers. In terms of assembly, interacts with capsid protein VP0, and capsid protein VP3 to form heterotrimeric protomers. Five protomers subsequently associate to form pentamers which serve as building blocks for the capsid. Interacts with capsid protein VP2, capsid protein VP3 and capsid protein VP4 following cleavage of capsid protein VP0. Interacts with host CD55. Interacts with host CXADR. As to quaternary structure, interacts with capsid protein VP1 and capsid protein VP3 in the mature capsid. Interacts with capsid protein VP0 and capsid protein VP1 to form heterotrimeric protomers. Five protomers subsequently associate to form pentamers which serve as building blocks for the capsid. Interacts with capsid protein VP4 in the mature capsid. Interacts with protein 2C; this interaction may be important for virion morphogenesis. In terms of assembly, interacts with capsid protein VP1 and capsid protein VP3. As to quaternary structure, homodimer. Homohexamer; forms a hexameric ring structure with 6-fold symmetry characteristic of AAA+ ATPases. Interacts (via N-terminus) with host RTN3 (via reticulon domain); this interaction is important for viral replication. Interacts with capsid protein VP3; this interaction may be important for virion morphogenesis. In terms of assembly, interacts with protein 3CD. As to quaternary structure, homodimer. Interacts with host GBF1. Interacts (via GOLD domain) with host ACBD3 (via GOLD domain); this interaction allows the formation of a viral protein 3A/ACBD3 heterotetramer with a 2:2 stoichiometry, which will stimulate the recruitment of host PI4KB in order to synthesize PI4P at the viral RNA replication sites. Interacts with RNA-directed RNA polymerase. In terms of assembly, interacts with host TICAM1 (via C-terminus). As to quaternary structure, interacts with protein 3AB and with RNA-directed RNA polymerase. Interacts with Viral protein genome-linked and with protein 3CD. The cofactor is Mg(2+). Specific enzymatic cleavages in vivo by the viral proteases yield processing intermediates and the mature proteins. In terms of processing, myristoylation is required for the formation of pentamers during virus assembly. Further assembly of 12 pentamers and a molecule of genomic RNA generates the provirion. Post-translationally, during virion maturation, immature virions are rendered infectious following cleavage of VP0 into VP4 and VP2. This maturation seems to be an autocatalytic event triggered by the presence of RNA in the capsid and it is followed by a conformational change infectious virion. Myristoylation is required during RNA encapsidation and formation of the mature virus particle. In terms of processing, VPg is uridylylated by the polymerase into VPg-pUpU. This acts as a nucleotide-peptide primer for the genomic RNA replication.

It is found in the virion. The protein localises to the host cytoplasm. The protein resides in the host cytoplasmic vesicle membrane. It localises to the host nucleus. It catalyses the reaction a ribonucleoside 5'-triphosphate + H2O = a ribonucleoside 5'-diphosphate + phosphate + H(+). The catalysed reaction is Selective cleavage of Tyr-|-Gly bond in the picornavirus polyprotein.. It carries out the reaction RNA(n) + a ribonucleoside 5'-triphosphate = RNA(n+1) + diphosphate. The enzyme catalyses Selective cleavage of Gln-|-Gly bond in the poliovirus polyprotein. In other picornavirus reactions Glu may be substituted for Gln, and Ser or Thr for Gly.. Its activity is regulated as follows. Replication or transcription is subject to high level of random mutations by the nucleotide analog ribavirin. Functionally, forms an icosahedral capsid of pseudo T=3 symmetry with capsid proteins VP2 and VP3. The capsid is 300 Angstroms in diameter, composed of 60 copies of each capsid protein and enclosing the viral positive strand RNA genome. Capsid protein VP1 mainly forms the vertices of the capsid. Capsid protein VP1 interacts with host CD55 and CXADR to provide virion attachment to target host cells. This attachment induces virion internalization. Tyrosine kinases are probably involved in the entry process. After binding to its receptor, the capsid undergoes conformational changes. Capsid protein VP1 N-terminus (that contains an amphipathic alpha-helix) and capsid protein VP4 are externalized. Together, they shape a pore in the host membrane through which viral genome is translocated to host cell cytoplasm. In terms of biological role, forms an icosahedral capsid of pseudo T=3 symmetry with capsid proteins VP2 and VP3. The capsid is 300 Angstroms in diameter, composed of 60 copies of each capsid protein and enclosing the viral positive strand RNA genome. Its function is as follows. Lies on the inner surface of the capsid shell. After binding to the host receptor, the capsid undergoes conformational changes. Capsid protein VP4 is released, Capsid protein VP1 N-terminus is externalized, and together, they shape a pore in the host membrane through which the viral genome is translocated into the host cell cytoplasm. Component of immature procapsids, which is cleaved into capsid proteins VP4 and VP2 after maturation. Allows the capsid to remain inactive before the maturation step. Functionally, cysteine protease that cleaves viral polyprotein and specific host proteins. It is responsible for the autocatalytic cleavage between the P1 and P2 regions, which is the first cleavage occurring in the polyprotein. Also cleaves the host translation initiation factor EIF4G1, in order to shut down the capped cellular mRNA translation. Inhibits the host nucleus-cytoplasm protein and RNA trafficking by cleaving host members of the nuclear pores. Counteracts stress granule formation probably by antagonizing its assembly or promoting its dissassembly. Cleaves and inhibits host IFIH1/MDA5, thereby inhibiting the type-I IFN production and the establishment of the antiviral state. Cleaves and inhibits host MAVS, thereby inhibiting the type-I IFN production and the establishment of the antiviral state. In terms of biological role, plays an essential role in the virus replication cycle by acting as a viroporin. Creates a pore in the host endoplasmic reticulum and as a consequence releases Ca2+ in the cytoplasm of infected cell. In turn, high levels of cytoplasmic calcium may trigger membrane trafficking and transport of viral ER-associated proteins to viroplasms, sites of viral genome replication. Its function is as follows. Induces and associates with structural rearrangements of intracellular membranes. Displays RNA-binding, nucleotide binding and NTPase activities. May play a role in virion morphogenesis and viral RNA encapsidation by interacting with the capsid protein VP3. Localizes the viral replication complex to the surface of membranous vesicles. Together with protein 3CD binds the Cis-Active RNA Element (CRE) which is involved in RNA synthesis initiation. Acts as a cofactor to stimulate the activity of 3D polymerase, maybe through a nucleid acid chaperone activity. Functionally, localizes the viral replication complex to the surface of membranous vesicles. It inhibits host cell endoplasmic reticulum-to-Golgi apparatus transport and causes the disassembly of the Golgi complex, possibly through GBF1 interaction. This would result in depletion of MHC, trail receptors and IFN receptors at the host cell surface. Plays an essential role in viral RNA replication by recruiting ACBD3 and PI4KB at the viral replication sites, thereby allowing the formation of the rearranged membranous structures where viral replication takes place. In terms of biological role, acts as a primer for viral RNA replication and remains covalently bound to viral genomic RNA. VPg is uridylylated prior to priming replication into VPg-pUpU. The oriI viral genomic sequence may act as a template for this. The VPg-pUpU is then used as primer on the genomic RNA poly(A) by the RNA-dependent RNA polymerase to replicate the viral genome. During genome replication, the VPg-RNA linkage is removed by the host TDP2, thereby accelerating replication. During the late stage of the replication cycle, host TDP2 is excluded from sites of viral RNA synthesis and encapsidation, allowing for the generation of progeny virions. Its function is as follows. Involved in the viral replication complex and viral polypeptide maturation. It exhibits protease activity with a specificity and catalytic efficiency that is different from protease 3C. Protein 3CD lacks polymerase activity. Protein 3CD binds to the 5'UTR of the viral genome. Major viral protease that mediates proteolytic processing of the polyprotein. Cleaves host EIF5B, contributing to host translation shutoff. Cleaves also host PABPC1, contributing to host translation shutoff. Cleaves and inhibits host RIGI, thereby inhibiting the type-I IFN production and the establishment of the antiviral state. Cleaves and inhibits host MAVS, thereby inhibiting the type-I IFN production and the establishment of the antiviral state. Cleaves and inhibits host TICAM1/TRIF, thereby inhibiting the type-I IFN production. Cleaves host NLRP1, triggers host N-glycine-mediated degradation of the autoinhibitory NLRP1 N-terminal fragment. Cleaves host transcription factor TFEB, thereby disrupting host lysosomal functions and enhancing viral infection. Functionally, replicates the viral genomic RNA on the surface of intracellular membranes. May form linear arrays of subunits that propagate along a strong head-to-tail interaction called interface-I. Covalently attaches UMP to a tyrosine of VPg, which is used to prime RNA synthesis. The positive stranded RNA genome is first replicated at virus induced membranous vesicles, creating a dsRNA genomic replication form. This dsRNA is then used as template to synthesize positive stranded RNA genomes. ss(+)RNA genomes are either translated, replicated or encapsidated. In Coxsackievirus B3 (strain Nancy), this protein is Genome polyprotein.